A 330-amino-acid chain; its full sequence is Cyclin N-terminal domain-containing protein 1 (330 aa).

Residues 27–178 form the Cyclin N-terminal domain; sequence DALLHLAQQN…VLKSLNFRIN (152 aa).

As to quaternary structure, interacts with PRR19; this interaction promotes crossover formation. Interacts with RFC3 and RFC4; these interactions facilitate crossover formation. Interacts with CDC34; this interaction regulates the cell-cycle progression.

It localises to the nucleus. The protein localises to the cytoplasm. Its subcellular location is the chromosome. Plays a role in the different steps of crossover formation during meiotic recombination. Participates in the crossover differentiation step of crossover-specific recombination intermediates through its interaction with PRR19. In addition, stimulates crossover formation through the interactions with RFC3 and RFC4 and simultaneously regulates cell-cycle progression through interactions with CDC34 and subsequent ubiquitination of WEE1. May also participates in an active deselection process that destabilizes or removes excess pre-CO intermediates. This chain is Cyclin N-terminal domain-containing protein 1, found in Homo sapiens (Human).